The sequence spans 494 residues: Transcriptional regulator of yeast form adherence 3 (494 aa).

One can recognise an SPX domain in the interval 1–360 (MKFAKTLERT…SLGIQKTFPK (360 aa)). The RING-type zinc-finger motif lies at 398-437 (CPICMNIAYKPIRLSCGHLFCVRCLVKMKQDDKTSCPLCR).

Its subcellular location is the nucleus. Its function is as follows. Transcription factor required for yeast cell adherence to silicone substrate. This chain is Transcriptional regulator of yeast form adherence 3 (TRY3), found in Candida albicans (strain SC5314 / ATCC MYA-2876) (Yeast).